A 263-amino-acid chain; its full sequence is Lens fiber major intrinsic protein (263 aa).

Topologically, residues Met1–Phe9 are cytoplasmic. The chain crosses the membrane as a helical span at residues Trp10–Gly29. Over Ala30–Val41 the chain is Extracellular. Residues Leu42 to Val59 traverse the membrane as a helical segment. The Cytoplasmic portion of the chain corresponds to Gly60 to His61. An intramembrane region (discontinuously helical) is located at residues Ile62–Val77. Positions Asn68–Ala70 match the NPA 1 motif. Over Gly78–Ser82 the chain is Cytoplasmic. A helical membrane pass occupies residues Leu83–Ser106. The Extracellular portion of the chain corresponds to Val107–Val127. A helical membrane pass occupies residues Xaa128 to Thr148. At Tyr149 to Arg156 the chain is on the cytoplasmic side. Residues Leu157–Gly175 traverse the membrane as a helical segment. Topologically, residues Met176–Tyr178 are extracellular. Positions Thr179–Ile193 form an intramembrane region, discontinuously helical. The short motif at Asn184 to Ala186 is the NPA 2 element. At Leu194–Asn200 the chain is on the extracellular side. A helical membrane pass occupies residues His201 to Leu222. At Leu223–Leu263 the chain is on the cytoplasmic side. The segment at Leu227–Leu237 is interaction with CALM. A phosphoserine mark is found at Ser235 and Ser243. The tract at residues Lys238 to Leu263 is disordered. Deamidated asparagine; by deterioration is present on residues Asn245 and Asn246.

The protein belongs to the MIP/aquaporin (TC 1.A.8) family. As to quaternary structure, homotetramer; each monomer provides an independent water pore. Two homotetramers on opposing membranes can dimerize, forming a cell-cell junction. Interacts with CALM; the calcium-calmodulin/CALM complex interacts with the cytoplasmic domains of two aquaporins, leading to channel closure. Interacts with BFSP1 (via C-terminus); prevents calcium-dependent inhibition of the water channel activity. In terms of processing, subject to partial proteolytic cleavage in the eye lens core. Partial proteolysis promotes interactions between tetramers from adjoining membranes. Fatty acylated at Met-1 and Lys-238. The acyl modifications, in decreasing order of ion abundance, are: oleoyl (C18:1) &gt; palmitoyl (C16:0) &gt; stearoyl (C18:0) &gt; eicosenoyl (C20:1) &gt; dihomo-gamma-linolenoyl (C20:3) &gt; palmitoleoyl (C16:1) &gt; eicosadienoyl (C20:2). Detected in eye lens (at protein level).

Its subcellular location is the cell membrane. It is found in the cell junction. The enzyme catalyses H2O(in) = H2O(out). The water channel activity is inhibited by calcium through calmodulin/CALM. Aquaporins form homotetrameric transmembrane channels, with each monomer independently mediating water transport across the plasma membrane along its osmotic gradient. Specifically expressed in lens fiber cells, this aquaporin is crucial for maintaining lens water homeostasis and transparency. Beyond water permeability, it also acts as a cell-to-cell adhesion molecule, forming thin junctions between lens fiber cells that are essential for maintaining the ordered structure and transparency of the lens. The chain is Lens fiber major intrinsic protein from Cavia porcellus (Guinea pig).